Reading from the N-terminus, the 160-residue chain is MGNIAVCPGSFDPVTLGHLDIIKRGAKIFDEVYVCVLNNSSKKPLFTVEERCELIRQATKDLPNIKVESFHGLLVDYAKQKEAKVILRGLRAVTDFEYEMQGTSMNKVLNDDIETFFMMTNNQYSFLSSSIVKEVAKYDGSVKGLVPKEVEEALIEKFKG.

S10 provides a ligand contact to substrate. ATP is bound by residues 10-11 and H18; that span reads SF. Residues K42, L74, and R88 each contribute to the substrate site. Residues 89-91, E99, and 124-130 contribute to the ATP site; these read GLR and YSFLSSS.

It belongs to the bacterial CoaD family. Homohexamer. Mg(2+) serves as cofactor.

Its subcellular location is the cytoplasm. The catalysed reaction is (R)-4'-phosphopantetheine + ATP + H(+) = 3'-dephospho-CoA + diphosphate. It participates in cofactor biosynthesis; coenzyme A biosynthesis; CoA from (R)-pantothenate: step 4/5. In terms of biological role, reversibly transfers an adenylyl group from ATP to 4'-phosphopantetheine, yielding dephospho-CoA (dPCoA) and pyrophosphate. This chain is Phosphopantetheine adenylyltransferase, found in Bacillus pumilus (strain SAFR-032).